A 642-amino-acid chain; its full sequence is Threonine--tRNA ligase (642 aa).

In terms of domain architecture, TGS spans 1 to 61 (MPVITLPDGS…ENDAQLSIIT (61 aa)). Residues 243 to 534 (DHRKIGKQLD…LTEEFAGFFP (292 aa)) form a catalytic region. Lys-286 bears the N6-acetyllysine mark. The Zn(2+) site is built by Cys-334, His-385, and His-511.

Belongs to the class-II aminoacyl-tRNA synthetase family. In terms of assembly, homodimer. The cofactor is Zn(2+).

It is found in the cytoplasm. It carries out the reaction tRNA(Thr) + L-threonine + ATP = L-threonyl-tRNA(Thr) + AMP + diphosphate + H(+). In terms of biological role, catalyzes the attachment of threonine to tRNA(Thr) in a two-step reaction: L-threonine is first activated by ATP to form Thr-AMP and then transferred to the acceptor end of tRNA(Thr). Also edits incorrectly charged L-seryl-tRNA(Thr). The protein is Threonine--tRNA ligase of Escherichia coli O8 (strain IAI1).